Here is a 135-residue protein sequence, read N- to C-terminus: FK506-binding protein 2 (135 aa).

The N-terminal stretch at 1–20 (MRVPIITTLLTLALTGLSQA) is a signal peptide. The PPIase FKBP-type domain maps to 40–128 (GDTVKMHYRG…IFQTELLEIE (89 aa)). The Prevents secretion from ER signature appears at 132-135 (KDEL).

This sequence belongs to the FKBP-type PPIase family. FKBP2 subfamily.

Its subcellular location is the endoplasmic reticulum. It catalyses the reaction [protein]-peptidylproline (omega=180) = [protein]-peptidylproline (omega=0). Its activity is regulated as follows. Inhibited by both FK506 and rapamycin. Functionally, PPIases accelerate the folding of proteins. It catalyzes the cis-trans isomerization of proline imidic peptide bonds in oligopeptides. The chain is FK506-binding protein 2 (fkbB) from Emericella nidulans (strain FGSC A4 / ATCC 38163 / CBS 112.46 / NRRL 194 / M139) (Aspergillus nidulans).